A 277-amino-acid polypeptide reads, in one-letter code: Proteasome subunit beta type-7 (277 aa).

The propeptide at 1 to 43 is removed in mature form; that stretch reads MAAVSVFQPPVGGFSFDNCRRNAVLEADFAKKGFKLPKARKTG. The active-site Nucleophile is the Thr-44.

It belongs to the peptidase T1B family. The 26S proteasome consists of a 20S proteasome core and two 19S regulatory subunits. The 20S proteasome core is a barrel-shaped complex made of 28 subunits that are arranged in four stacked rings. The two outer rings are each formed by seven alpha subunits, and the two inner rings are formed by seven beta subunits. The proteolytic activity is exerted by three beta-subunits PSMB5, PSMB6 and PSMB7.

It is found in the cytoplasm. It localises to the nucleus. The enzyme catalyses Cleavage of peptide bonds with very broad specificity.. Functionally, component of the 20S core proteasome complex involved in the proteolytic degradation of most intracellular proteins. This complex plays numerous essential roles within the cell by associating with different regulatory particles. Associated with two 19S regulatory particles, forms the 26S proteasome and thus participates in the ATP-dependent degradation of ubiquitinated proteins. The 26S proteasome plays a key role in the maintenance of protein homeostasis by removing misfolded or damaged proteins that could impair cellular functions, and by removing proteins whose functions are no longer required. Associated with the PA200 or PA28, the 20S proteasome mediates ubiquitin-independent protein degradation. This type of proteolysis is required in several pathways including spermatogenesis (20S-PA200 complex) or generation of a subset of MHC class I-presented antigenic peptides (20S-PA28 complex). Within the 20S core complex, PSMB7 displays a trypsin-like activity. The chain is Proteasome subunit beta type-7 (Psmb7) from Mus musculus (Mouse).